A 487-amino-acid chain; its full sequence is UDP-N-acetylmuramate--L-alanine ligase (487 aa).

126-132 (GTHGKTT) contacts ATP.

It belongs to the MurCDEF family.

It localises to the cytoplasm. The catalysed reaction is UDP-N-acetyl-alpha-D-muramate + L-alanine + ATP = UDP-N-acetyl-alpha-D-muramoyl-L-alanine + ADP + phosphate + H(+). Its pathway is cell wall biogenesis; peptidoglycan biosynthesis. Cell wall formation. The polypeptide is UDP-N-acetylmuramate--L-alanine ligase (Psychromonas ingrahamii (strain DSM 17664 / CCUG 51855 / 37)).